The chain runs to 142 residues: HTH-type transcriptional regulator MntR (142 aa).

The 63-residue stretch at 1 to 63 folds into the HTH dtxR-type domain; sequence MPTPSMEDYI…YEKYRGLVLT (63 aa). Residues D8, E11, H77, E99, E102, and H103 each coordinate Mn(2+).

It belongs to the DtxR/MntR family. In terms of assembly, homodimer.

Its subcellular location is the cytoplasm. Its activity is regulated as follows. DNA binding is strongly activated by Mn(2+). In terms of biological role, central regulator of manganese homeostasis. The chain is HTH-type transcriptional regulator MntR from Bacillus cereus (strain ATCC 14579 / DSM 31 / CCUG 7414 / JCM 2152 / NBRC 15305 / NCIMB 9373 / NCTC 2599 / NRRL B-3711).